The sequence spans 210 residues: Protein GrpE (210 aa).

2 disordered regions span residues 1–40 (MTDD…PDPI) and 191–210 (KGGP…EKDA). Residues 11–23 (DATAADAAADATA) show a composition bias toward low complexity.

This sequence belongs to the GrpE family. In terms of assembly, homodimer.

The protein resides in the cytoplasm. Its function is as follows. Participates actively in the response to hyperosmotic and heat shock by preventing the aggregation of stress-denatured proteins, in association with DnaK and GrpE. It is the nucleotide exchange factor for DnaK and may function as a thermosensor. Unfolded proteins bind initially to DnaJ; upon interaction with the DnaJ-bound protein, DnaK hydrolyzes its bound ATP, resulting in the formation of a stable complex. GrpE releases ADP from DnaK; ATP binding to DnaK triggers the release of the substrate protein, thus completing the reaction cycle. Several rounds of ATP-dependent interactions between DnaJ, DnaK and GrpE are required for fully efficient folding. The chain is Protein GrpE from Rhizobium johnstonii (strain DSM 114642 / LMG 32736 / 3841) (Rhizobium leguminosarum bv. viciae).